A 380-amino-acid chain; its full sequence is 3-isopropylmalate dehydratase large subunit (380 aa).

[4Fe-4S] cluster contacts are provided by Cys-262, Cys-320, and Cys-323.

This sequence belongs to the aconitase/IPM isomerase family. LeuC type 2 subfamily. In terms of assembly, heterodimer of LeuC and LeuD. [4Fe-4S] cluster serves as cofactor.

The catalysed reaction is (2R,3S)-3-isopropylmalate = (2S)-2-isopropylmalate. Its pathway is amino-acid biosynthesis; L-leucine biosynthesis; L-leucine from 3-methyl-2-oxobutanoate: step 2/4. In terms of biological role, catalyzes the isomerization between 2-isopropylmalate and 3-isopropylmalate, via the formation of 2-isopropylmaleate. In Pyrococcus horikoshii (strain ATCC 700860 / DSM 12428 / JCM 9974 / NBRC 100139 / OT-3), this protein is 3-isopropylmalate dehydratase large subunit.